A 149-amino-acid chain; its full sequence is UPF0178 protein Psyc_0274 (149 aa).

Belongs to the UPF0178 family.

The polypeptide is UPF0178 protein Psyc_0274 (Psychrobacter arcticus (strain DSM 17307 / VKM B-2377 / 273-4)).